A 264-amino-acid chain; its full sequence is Thymidylate synthase (264 aa).

Residue Arg-21 coordinates dUMP. Residue His-51 participates in (6R)-5,10-methylene-5,6,7,8-tetrahydrofolate binding. 126–127 serves as a coordination point for dUMP; that stretch reads RR. Residue Cys-146 is the Nucleophile of the active site. DUMP-binding positions include 166–169, Asn-177, and 207–209; these read RSAD and HLY. Asp-169 is a (6R)-5,10-methylene-5,6,7,8-tetrahydrofolate binding site. Ala-263 is a binding site for (6R)-5,10-methylene-5,6,7,8-tetrahydrofolate.

This sequence belongs to the thymidylate synthase family. Bacterial-type ThyA subfamily. Homodimer.

It is found in the cytoplasm. The catalysed reaction is dUMP + (6R)-5,10-methylene-5,6,7,8-tetrahydrofolate = 7,8-dihydrofolate + dTMP. The protein operates within pyrimidine metabolism; dTTP biosynthesis. Its function is as follows. Catalyzes the reductive methylation of 2'-deoxyuridine-5'-monophosphate (dUMP) to 2'-deoxythymidine-5'-monophosphate (dTMP) while utilizing 5,10-methylenetetrahydrofolate (mTHF) as the methyl donor and reductant in the reaction, yielding dihydrofolate (DHF) as a by-product. This enzymatic reaction provides an intracellular de novo source of dTMP, an essential precursor for DNA biosynthesis. This chain is Thymidylate synthase, found in Bartonella henselae (strain ATCC 49882 / DSM 28221 / CCUG 30454 / Houston 1) (Rochalimaea henselae).